The following is a 225-amino-acid chain: Heptaprenylglyceryl phosphate synthase (225 aa).

Position 6 (K6) interacts with sn-glycerol 1-phosphate. Positions 8 and 34 each coordinate Mg(2+). Sn-glycerol 1-phosphate is bound by residues 153-158 (YVEYSG), G183, and 203-204 (GN).

This sequence belongs to the GGGP/HepGP synthase family. Group I subfamily. In terms of assembly, homodimer. Mg(2+) is required as a cofactor.

The catalysed reaction is sn-glycerol 1-phosphate + all-trans-heptaprenyl diphosphate = 3-heptaprenyl-sn-glycero-1-phosphate + diphosphate. It participates in membrane lipid metabolism; glycerophospholipid metabolism. In terms of biological role, prenyltransferase that catalyzes in vivo the transfer of the heptaprenyl moiety of heptaprenyl pyrophosphate (HepPP; 35 carbon atoms) to the C3 hydroxyl of sn-glycerol-1-phosphate (G1P), producing heptaprenylglyceryl phosphate (HepGP). This reaction is an ether-bond-formation step in the biosynthesis of archaea-type G1P-based membrane lipids found in Bacillales. To a much lesser extent, is also able to use geranylgeranyl diphosphate (GGPP; C20) as the prenyl donor. The sequence is that of Heptaprenylglyceryl phosphate synthase from Listeria monocytogenes serovar 1/2a (strain ATCC BAA-679 / EGD-e).